A 195-amino-acid chain; its full sequence is Interferon tau-2 (195 aa).

The N-terminal stretch at M1–G23 is a signal peptide. 2 cysteine pairs are disulfide-bonded: C24–C122 and C52–C162.

The protein belongs to the alpha/beta interferon family. IFN-alphaII subfamily. In terms of tissue distribution, constitutively and exclusively expressed in the mononuclear cells of the extraembryonic trophectoderm.

It is found in the secreted. Its function is as follows. Paracrine hormone primarily responsible for maternal recognition of pregnancy. Interacts with endometrial receptors, probably type I interferon receptors, and blocks estrogen receptor expression, preventing the estrogen-induced increase in oxytocin receptor expression in the endometrium. This results in the suppression of the pulsatile endometrial release of the luteolytic hormone prostaglandin F2-alpha, hindering the regression of the corpus luteum (luteolysis) and therefore a return to ovarian cyclicity. This, and a possible direct effect of IFN-tau on prostaglandin synthesis, leads in turn to continued ovarian progesterone secretion, which stimulates the secretion by the endometrium of the nutrients required for the growth of the conceptus. In summary, displays particularly high antiviral and antiproliferative potency concurrently with particular weak cytotoxicity, high antiluteolytic activity and immunomodulatory properties. In contrast with other IFNs, IFN-tau is not virally inducible. This chain is Interferon tau-2 (IFNT2), found in Ovis aries (Sheep).